A 156-amino-acid polypeptide reads, in one-letter code: MIRVVATGTFDILHPGHLWYLEESAKLGDELYVIVARDANIRHKPRPVIPEEQRLVMVAALKPVTHAVLGDLEDMFRPIREIKPDIITLGCNQHFDPETLQKALEKQNIRAQVVRISEHSSSPFTSSRDIVRKIAELTHQRSQTRETKEQRECGAV.

ATP contacts are provided by residues 9-10 (TF), 14-17 (HPGH), asparagine 92, and histidine 119.

This sequence belongs to the archaeal FAD synthase family. As to quaternary structure, homodimer. Requires a divalent metal cation as cofactor.

The enzyme catalyses FMN + ATP + H(+) = FAD + diphosphate. The protein operates within cofactor biosynthesis; FAD biosynthesis; FAD from FMN: step 1/1. Catalyzes the transfer of the AMP portion of ATP to flavin mononucleotide (FMN) to produce flavin adenine dinucleotide (FAD) coenzyme. In Methanospirillum hungatei JF-1 (strain ATCC 27890 / DSM 864 / NBRC 100397 / JF-1), this protein is FAD synthase.